A 404-amino-acid polypeptide reads, in one-letter code: Proteasomal ubiquitin receptor ADRM1-B (404 aa).

Residues 17–130 enclose the Pru domain; the sequence is SSSKYLVEFR…RKVNEYLNNP (114 aa). Disordered regions lie at residues 128-149, 195-258, and 376-404; these read NNPPMPGALGGSGSGSHELSAL, GSGG…TSPT, and FAKAMQSTSSQKERESSEKKEEEEDMSLD. Residues 195-247 are compositionally biased toward low complexity; sequence GSGGPTTSSSSSSSRSQSAAVTPSSTTSSTRTTSAPVAPAAAPATTPSPAVSS. Positions 248–258 are enriched in polar residues; that stretch reads NDGASAATSPT. The DEUBAD domain maps to 278–390; it reads TGEGGQQVDL…QSTSSQKERE (113 aa). Residues 386–395 are compositionally biased toward basic and acidic residues; that stretch reads QKERESSEKK.

It belongs to the ADRM1 family. Component of the 19S proteasome regulatory particle complex. The 26S proteasome consists of a 20S core particle (CP) and two 19S regulatory subunits (RP).

The protein resides in the cytoplasm. It is found in the nucleus. Its function is as follows. Component of the 26S proteasome, a multiprotein complex involved in the ATP-dependent degradation of ubiquitinated proteins. This complex plays a key role in the maintenance of protein homeostasis by removing misfolded or damaged proteins, which could impair cellular functions, and by removing proteins whose functions are no longer required. Therefore, the proteasome participates in numerous cellular processes, including cell cycle progression, apoptosis, or DNA damage repair. Within the complex, functions as a proteasomal ubiquitin receptor. The sequence is that of Proteasomal ubiquitin receptor ADRM1-B (adrm1-b) from Xenopus laevis (African clawed frog).